Reading from the N-terminus, the 356-residue chain is MNFNYLIKNNILNLKPYQSARRLKHSGKIWLNANEYPIAPYYKGQYKNINRYPECQPPELINNYAAYSGVQSDHILVSRGADESIELLMKVFCRPNKDFIIFCPPTYGMYKTNAEILEIYYRMIPTKKNWQLDLSSIQSQLNNVKLIYICNPNNPTGNIIYLHSLKKLLKIIQNKALLVCDEAYIDFCRHASLIQLLTEYPNLIILRTLSKAFALAGLRCGFTLANPKIINLLTKVITPYPIPTPVIDIATQALTPQNIQYTQTRIKKIHNNRNMLIKALKQCSCVQQIFPSYTNYILVKFYPQYQVFKTLLNQGIVLRDQSYQPGLMHCLRITIGSYNECQLVISTLKKLKHSTF.

N6-(pyridoxal phosphate)lysine is present on lysine 211.

It belongs to the class-II pyridoxal-phosphate-dependent aminotransferase family. Histidinol-phosphate aminotransferase subfamily. As to quaternary structure, homodimer. Pyridoxal 5'-phosphate serves as cofactor.

The catalysed reaction is L-histidinol phosphate + 2-oxoglutarate = 3-(imidazol-4-yl)-2-oxopropyl phosphate + L-glutamate. The protein operates within amino-acid biosynthesis; L-histidine biosynthesis; L-histidine from 5-phospho-alpha-D-ribose 1-diphosphate: step 7/9. The sequence is that of Histidinol-phosphate aminotransferase from Blochmanniella floridana.